Consider the following 398-residue polypeptide: MIIKPRVRGFICVTTHPAGCEANVKQQIDYVEAKGPVVNGPKKVLVIGSSTGYGLAARITAAFGSGADTLGVFFERPGSESKPGTAGWYNSAAFEKFAHEKGLYARSINGDAFSDEVKRLTIETIKRDLGKVDLVVYSLAAPRRTHPKSGEVFSSTLKPIGKSVSFRGLDTDKEVIKDVVLEAASDQEVADTVAVMGGEDWQMWIDALLEADVLADGAKTTAFTYLGEKITHDIYWNGSIGAAKKDLDQKVLGIRDKLAPLGGDARVSVLKAVVTQASSAIPMMPLYLSLLFKVMKEQGTHEGCIEQVDGLYRESLYGAEPRLDEEGRLRADYKELQPEVQSRVEELWDKVTNENLYELTDFAGYKSEFLNLFGFEVAGVDYEQDVNPDVQIANLIQA.

Residues 48 to 53, 74 to 75, 111 to 112, and 139 to 140 contribute to the NAD(+) site; these read GSSTGY, FE, DA, and LA. Y225 contributes to the substrate binding site. Y235 acts as the Proton donor in catalysis. NAD(+) contacts are provided by residues K244 and 273–275; that span reads VVT.

The protein belongs to the TER reductase family. In terms of assembly, monomer.

It catalyses the reaction a 2,3-saturated acyl-[ACP] + NAD(+) = a (2E)-enoyl-[ACP] + NADH + H(+). It functions in the pathway lipid metabolism; fatty acid biosynthesis. Functionally, involved in the final reduction of the elongation cycle of fatty acid synthesis (FAS II). Catalyzes the reduction of a carbon-carbon double bond in an enoyl moiety that is covalently linked to an acyl carrier protein (ACP). This is Enoyl-[acyl-carrier-protein] reductase [NADH] from Pseudomonas aeruginosa (strain UCBPP-PA14).